Here is a 271-residue protein sequence, read N- to C-terminus: Aminoglycoside 3'-phosphotransferase (271 aa).

D198 acts as the Proton acceptor in catalysis.

It belongs to the aminoglycoside phosphotransferase family.

It carries out the reaction kanamycin A + ATP = kanamycin 3'-phosphate + ADP + H(+). Resistance to kanamycin and structurally-related aminoglycosides, including amikacin. This Salmonella typhimurium protein is Aminoglycoside 3'-phosphotransferase.